The primary structure comprises 364 residues: Inactive protein RESTRICTED TEV MOVEMENT 2 (364 aa).

The region spanning 14-121 (VQYEDFVPKS…LPETSRTEAA (108 aa)) is the sHSP domain. The A-1 repeat unit spans residues 129-133 (LEEKR). The interval 129 to 220 (LEEKRLLEES…LEERRLEERK (92 aa)) is 6 X 5 AA repeats A of L-E-E-[SKR]-[ERK]. An A-2 repeat occupies 135-139 (LEESR). An A-3 repeat occupies 156–160 (LEEKE). A B-1 repeat occupies 163-176 (IRKLQEEAKAKEEA). The segment at 163–206 (IRKLQEEAKAKEEAEMRKLQEEAKAKEEAAAKKLQEEIEAKEKL) is 3 X 14 AA repeats B of [IMA]-[RK]-K-L-Q-E-E-A-K-A-K-E-[EK]-[LA]. Residues 178–191 (MRKLQEEAKAKEEA) form a B-2 repeat. Residues 193 to 205 (AKKLQEEIEAKEK) form a B-3 repeat. An A-4 repeat occupies 206-210 (LEERK). The A-5 repeat unit spans residues 211-215 (LEERR). The stretch at 216-220 (LEERK) is one A-6 repeat. A helical membrane pass occupies residues 322 to 342 (LMMNVGVAALVIFALGAYVSY). A disordered region spans residues 345-364 (CSSSSSSSSPSSSSSSTKPE). The span at 346-364 (SSSSSSSSPSSSSSSTKPE) shows a compositional bias: low complexity.

This sequence belongs to the small heat shock protein (HSP20) family.

It is found in the cell membrane. Its function is as follows. Seems to not be involved in heat resistance. Unable to mediate restriction of long-distance movement of the pathogenic tobacco etch virus (TEV) without causing a hypersensitive response or inducing systemic acquired resistance. This is Inactive protein RESTRICTED TEV MOVEMENT 2 (RTM2) from Arabidopsis thaliana (Mouse-ear cress).